Here is a 1383-residue protein sequence, read N- to C-terminus: DNA-directed RNA polymerase subunit beta'' (1383 aa).

Residues Cys-220, Cys-289, Cys-296, and Cys-299 each coordinate Zn(2+).

It belongs to the RNA polymerase beta' chain family. RpoC2 subfamily. In terms of assembly, in plastids the minimal PEP RNA polymerase catalytic core is composed of four subunits: alpha, beta, beta', and beta''. When a (nuclear-encoded) sigma factor is associated with the core the holoenzyme is formed, which can initiate transcription. It depends on Zn(2+) as a cofactor.

The protein resides in the plastid. The protein localises to the chloroplast. The catalysed reaction is RNA(n) + a ribonucleoside 5'-triphosphate = RNA(n+1) + diphosphate. Functionally, DNA-dependent RNA polymerase catalyzes the transcription of DNA into RNA using the four ribonucleoside triphosphates as substrates. The protein is DNA-directed RNA polymerase subunit beta'' of Oenothera biennis (German evening primrose).